The following is a 24-amino-acid chain: SM-11044-binding protein (24 aa).

May mediate relaxation of depolarized colon tonus. It binds iodocyanopindolol and SM-11044. This Rattus norvegicus (Rat) protein is SM-11044-binding protein.